The primary structure comprises 67 residues: Large ribosomal subunit protein bL32 (67 aa).

Residues 1 to 19 show a composition bias toward basic residues; that stretch reads MAVPKRKMSRSNTRARRSQ. Residues 1 to 21 are disordered; the sequence is MAVPKRKMSRSNTRARRSQWK.

Belongs to the bacterial ribosomal protein bL32 family.

The polypeptide is Large ribosomal subunit protein bL32 (Clavibacter sepedonicus (Clavibacter michiganensis subsp. sepedonicus)).